Reading from the N-terminus, the 130-residue chain is MFANIGWGEMLVLVVVGLVVLGPERLPGAIRWSSGALRQARDYLSGVTSQLRDDMGPEFDDLRGQLGELQKLRGMTPRAALTKHLLDGDDSIFTGNFDKAASATPAVDAVASAQEAPDEPVRPPFDSDAT.

Residues 2–22 (FANIGWGEMLVLVVVGLVVLG) form a helical membrane-spanning segment. The segment at 108-130 (DAVASAQEAPDEPVRPPFDSDAT) is disordered.

It belongs to the TatB family. As to quaternary structure, the Tat system comprises two distinct complexes: a TatABC complex, containing multiple copies of TatA, TatB and TatC subunits, and a separate TatA complex, containing only TatA subunits. Substrates initially bind to the TatABC complex, which probably triggers association of the separate TatA complex to form the active translocon.

The protein localises to the cell membrane. Functionally, part of the twin-arginine translocation (Tat) system that transports large folded proteins containing a characteristic twin-arginine motif in their signal peptide across membranes. Together with TatC, TatB is part of a receptor directly interacting with Tat signal peptides. TatB may form an oligomeric binding site that transiently accommodates folded Tat precursor proteins before their translocation. This is Sec-independent protein translocase protein TatB from Mycobacterium ulcerans (strain Agy99).